The primary structure comprises 288 residues: Pyridoxal kinase PdxY (288 aa).

Residues S12 and 47 to 48 (TQ) contribute to the substrate site. ATP-binding positions include D114, E151, K184, and 211–214 (RPLL). D225 contributes to the substrate binding site.

This sequence belongs to the pyridoxine kinase family. PdxY subfamily. As to quaternary structure, homodimer. It depends on Mg(2+) as a cofactor.

The enzyme catalyses pyridoxal + ATP = pyridoxal 5'-phosphate + ADP + H(+). The protein operates within cofactor metabolism; pyridoxal 5'-phosphate salvage; pyridoxal 5'-phosphate from pyridoxal: step 1/1. Its function is as follows. Pyridoxal kinase involved in the salvage pathway of pyridoxal 5'-phosphate (PLP). Catalyzes the phosphorylation of pyridoxal to PLP. This chain is Pyridoxal kinase PdxY, found in Pseudomonas syringae pv. syringae (strain B728a).